Here is a 390-residue protein sequence, read N- to C-terminus: Methylthioribose-1-phosphate isomerase (390 aa).

Aspartate 258 acts as the Proton donor in catalysis.

Belongs to the eIF-2B alpha/beta/delta subunits family. MtnA subfamily.

It is found in the cytoplasm. The protein resides in the nucleus. It carries out the reaction 5-(methylsulfanyl)-alpha-D-ribose 1-phosphate = 5-(methylsulfanyl)-D-ribulose 1-phosphate. Its pathway is amino-acid biosynthesis; L-methionine biosynthesis via salvage pathway; L-methionine from S-methyl-5-thio-alpha-D-ribose 1-phosphate: step 1/6. Catalyzes the interconversion of methylthioribose-1-phosphate (MTR-1-P) into methylthioribulose-1-phosphate (MTRu-1-P). The polypeptide is Methylthioribose-1-phosphate isomerase (Coccidioides posadasii (strain C735) (Valley fever fungus)).